The following is a 517-amino-acid chain: Intermediate filament family orphan 2 (517 aa).

An IF rod domain is found at 53 to 484 (NIHLLKGLNV…RLIKGSADRN (432 aa)). Disordered regions lie at residues 104-129 (EQAVQTGPELLRPPAPGGGHGLSSGA), 330-349 (KVASDDDISEQDGEVNRFSD), and 478-517 (KGSADRNSPSPSSVASSDSGSTDEIQDEFEREADVEPMVS). Positions 485-497 (SPSPSSVASSDSG) are enriched in low complexity. Residues 501-517 (EIQDEFEREADVEPMVS) show a composition bias toward acidic residues.

This sequence belongs to the intermediate filament family.

The protein is Intermediate filament family orphan 2 (IFFO2) of Homo sapiens (Human).